A 78-amino-acid chain; its full sequence is Acyl carrier protein (78 aa).

The Carrier domain maps to 2–77; it reads SEIASRVKAI…DAVSYIEANA (76 aa). Serine 37 bears the O-(pantetheine 4'-phosphoryl)serine mark.

This sequence belongs to the acyl carrier protein (ACP) family. Post-translationally, 4'-phosphopantetheine is transferred from CoA to a specific serine of apo-ACP by AcpS. This modification is essential for activity because fatty acids are bound in thioester linkage to the sulfhydryl of the prosthetic group.

It is found in the cytoplasm. It functions in the pathway lipid metabolism; fatty acid biosynthesis. Its function is as follows. Carrier of the growing fatty acid chain in fatty acid biosynthesis. The polypeptide is Acyl carrier protein (Phocaeicola vulgatus (strain ATCC 8482 / DSM 1447 / JCM 5826 / CCUG 4940 / NBRC 14291 / NCTC 11154) (Bacteroides vulgatus)).